The sequence spans 215 residues: Adenylate kinase (215 aa).

14 to 19 (GVGKGT) lines the ATP pocket. The interval 34-63 (STGDIFRSVMQEQGALSQTLAHYMNQGLYV) is NMP. AMP is bound by residues Thr35, Arg40, 61–63 (LYV), 91–94 (GYPR), and Gln98. Positions 128–165 (NRLVCPSCGSVYNKQSKPPLKANQCDRCHATLQARNDD) are LID. Residue Arg129 participates in ATP binding. Residues Cys132 and Cys135 each contribute to the Zn(2+) site. An ATP-binding site is contributed by 138-139 (VY). The Zn(2+) site is built by Cys152 and Cys155. Arg162 and Arg173 together coordinate AMP. Gln211 contacts ATP.

Belongs to the adenylate kinase family. Monomer.

The protein resides in the cytoplasm. It catalyses the reaction AMP + ATP = 2 ADP. It participates in purine metabolism; AMP biosynthesis via salvage pathway; AMP from ADP: step 1/1. In terms of biological role, catalyzes the reversible transfer of the terminal phosphate group between ATP and AMP. Plays an important role in cellular energy homeostasis and in adenine nucleotide metabolism. This Mycoplasma pneumoniae (strain ATCC 29342 / M129 / Subtype 1) (Mycoplasmoides pneumoniae) protein is Adenylate kinase.